Reading from the N-terminus, the 420-residue chain is F-box/LRR-repeat protein At2g43260 (420 aa).

One can recognise an F-box domain in the interval 7–53 (NPNSIDILPELLEEVLLRLPTKSILKCRIVSKQWRSLLESSRFAERH). 2 LRR repeats span residues 112-135 (QDWI…LNHN) and 226-251 (VYRI…QITV).

In Arabidopsis thaliana (Mouse-ear cress), this protein is F-box/LRR-repeat protein At2g43260.